We begin with the raw amino-acid sequence, 1520 residues long: MSDSDSEFSIEDSPKKKTAPKKEKASPKKKKDDANESMVMTEEDRNVFTSIDKKGGGSKQMAIEDIYQKKSQLEHILLRPDTYIGSVEHTEKTPMWVYNMEESKLEQRDISYVPGLYKIYDEILVNAADNKQRDPKMNTIKITINKEKNEISVYNNGKGIPVTQHKVEKVYVPELIFGTLLTSSNYNDDEKKVTGGRNGYGAKLCNIFSTKFTLETSSRDYKSAFKQTWIKNMTRDEEPKIVKSTDEDFTKITFSPDLAKFKMKELDDDICHLMARRAYDVAGSSKGVAVFLNGKRIPIKGFEDYVQMYTSQFNNEGEPLKIAYEQVGDRWQVALALSEKGFQQVSFVNSIATTKGGRHVDYVADQMVAKFIDSIKRKLTKTSMNIKPFQIKNHMWVFVNCLIENPTFDSQTKETMTLQQKQFGSTCVLSEKFSKAASSVGITDAVMSWVRFKQMDDLNKKCSKTKTSKLKGIPKLEDANDAGTKNSQQCTLILTEGDSAKTLAVSGLSVVGRDKYGVFPLRGKLLNVREGNMKQIADNAEVNAMIKILGLQYKKKYETEDDFKTLRYGKLMVMADQDQDGSHIKGLVINFIHHFWPSLIQRNFVEEFITPIVKATKGKEEVSFYSLPEYSEWRMNTDNWKSYKIKYYKGLGTSTSKEAKEYFLDMVRHRIRFKYNGADDDNAVDMAFSKKKIEERKDWLSKWMREKKDRKQQGLAEEYLYNKDTRFVTFKDFVNRELVLFSNLDNERSIPCLVDGFKPGQRKVLFACFKRADKREVKVAQLAGAVAEISAYHHGEQSLMGTIVNLAQDYVGSNNINLLLPIGQFGTRLQGGKDSASARYIFTQLSPVTRTLFPAHDDNVLRFLYEENQRIEPEWYCPIIPMVLVNGAQGIGTGWSTNIPNYNPRELVKNIKRLIAGEPQKALAPWYKNFRGKIIQIDPSRFACYGEVAVLDDNTIEITELPIKQWTQDYKEKVLEGLMESSDKKSPVIVDYKEYHTDTTVKFVVKLSPGKLRELERGQDLHQVFKLQAVINTTCMVLFDAAGCLRTYTSPEAITQEFYDSRQEKYVQRKEYLLGVLQAQSKRLTNQARFILAKINNEIVLENKKKAAIVDVLIKMKFDADPVKKWKEEQKLKELRESGEIELDEDDLAAVAVEEDEAISSAAKAVETKLSDYDYLVGMALIKLSEEEKNKLIKESEEKMAEVRVIEKKTWQDLWHEDLDNFVSELDKQEAREKADQDASIKNAAKKLAADAKTGRGPKKNVCTEVLPSKDGQRIEPMLDAATKAKYEKMSQPKKERVKKEPKEPKEPKKVKKEGQDIKKFMSPAAPKTAKKEKSDGFNSDMSEESDVEFDEGIDFDSDDDGVEREDVVSKPKPRTGKGAAKAEVIDLSDDDEVPAKKPAPAKKAAPKKKKSEFSDLSGGDSDEEAEKKPSTSKKPSPKKAAPKTAEPKSKAVTDFFGASKKNGKKAAGSDDEDDESFVVAPREKSGRARKAPPTYDVDSGSDSDQPKKKRGRVVDSDSD.

Residues 1–10 (MSDSDSEFSI) show a composition bias toward acidic residues. The disordered stretch occupies residues 1 to 40 (MSDSDSEFSIEDSPKKKTAPKKEKASPKKKKDDANESMVM). The span at 12-34 (DSPKKKTAPKKEKASPKKKKDDA) shows a compositional bias: basic and acidic residues. Residues N126, N155, 183–185 (SSN), 196–203 (GRNGYGAK), and 411–413 (QTK) contribute to the ATP site. The Toprim domain occupies 490–607 (CTLILTEGDS…SLIQRNFVEE (118 aa)). Residues E496, D576, and D578 each contribute to the Mg(2+) site. The region spanning 750 to 1219 (IPCLVDGFKP…TWQDLWHEDL (470 aa)) is the Topo IIA-type catalytic domain. Y840 acts as the O-(5'-phospho-DNA)-tyrosine intermediate in catalysis. The interval 1249-1520 (AADAKTGRGP…RGRVVDSDSD (272 aa)) is disordered. Over residues 1283 to 1320 (TKAKYEKMSQPKKERVKKEPKEPKEPKKVKKEGQDIKK) the composition is skewed to basic and acidic residues. Residues 1342-1364 (MSEESDVEFDEGIDFDSDDDGVE) are compositionally biased toward acidic residues.

The protein belongs to the type II topoisomerase family. As to quaternary structure, homodimer. Interacts with nmad-1; the interaction is required for localization of top-2 to DNA. Interacts with gcna-1; this interaction allows the resolution of topoisomerase 2 DNA-protein cross-links. Requires Mg(2+) as cofactor. The cofactor is Mn(2+). It depends on Ca(2+) as a cofactor. Expressed in the hermaphrodite and male germline.

Its subcellular location is the nucleus. The protein localises to the nucleoplasm. It is found in the chromosome. It localises to the cytoplasm. The protein resides in the cytoskeleton. Its subcellular location is the spindle. The catalysed reaction is ATP-dependent breakage, passage and rejoining of double-stranded DNA.. Functionally, control of topological states of DNA by transient breakage and subsequent rejoining of DNA strands. Topoisomerase II makes double-strand breaks. Essential during mitosis in the adult germline and during embryogenesis for proper segregation of daughter chromosomes. Required for centromere resolution during mitosis. Required for chromosome segregation in anaphase of meiosis I during spermatogenesis. Promotes cleavage furrow stability during cytokinesis upon the presence of chromatin obstructions. Promotes DNA break formation upon zygotic genome activation in the Z2 and Z3 primordial germ cells in L1 larvae, thereby activating a checkpoint response. Essential for embryogenesis. In Caenorhabditis elegans, this protein is DNA topoisomerase 2 top-2.